We begin with the raw amino-acid sequence, 499 residues long: Lysine--tRNA ligase (499 aa).

Mg(2+) contacts are provided by glutamate 408 and glutamate 415.

It belongs to the class-II aminoacyl-tRNA synthetase family. In terms of assembly, homodimer. Mg(2+) is required as a cofactor.

Its subcellular location is the cytoplasm. The enzyme catalyses tRNA(Lys) + L-lysine + ATP = L-lysyl-tRNA(Lys) + AMP + diphosphate. This is Lysine--tRNA ligase from Agrobacterium fabrum (strain C58 / ATCC 33970) (Agrobacterium tumefaciens (strain C58)).